The primary structure comprises 155 residues: Protein-export protein SecB (155 aa).

The protein belongs to the SecB family. As to quaternary structure, homotetramer, a dimer of dimers. One homotetramer interacts with 1 SecA dimer.

It localises to the cytoplasm. In terms of biological role, one of the proteins required for the normal export of preproteins out of the cell cytoplasm. It is a molecular chaperone that binds to a subset of precursor proteins, maintaining them in a translocation-competent state. It also specifically binds to its receptor SecA. This is Protein-export protein SecB from Vibrio atlanticus (strain LGP32) (Vibrio splendidus (strain Mel32)).